Here is a 62-residue protein sequence, read N- to C-terminus: uncharacterized protein (62 aa).

This is an uncharacterized protein from Sulfolobus islandicus filamentous virus (isolate Iceland/Hveragerdi) (SIFV).